The primary structure comprises 127 residues: Small ribosomal subunit protein uS13 (127 aa).

The tract at residues 97-127 is disordered; it reads PVRGQRTRTNARTRRGRRVTVAGKKKAPSKK. Residues 101–127 show a composition bias toward basic residues; sequence QRTRTNARTRRGRRVTVAGKKKAPSKK.

It belongs to the universal ribosomal protein uS13 family. In terms of assembly, part of the 30S ribosomal subunit. Forms a loose heterodimer with protein S19. Forms two bridges to the 50S subunit in the 70S ribosome.

Functionally, located at the top of the head of the 30S subunit, it contacts several helices of the 16S rRNA. In the 70S ribosome it contacts the 23S rRNA (bridge B1a) and protein L5 of the 50S subunit (bridge B1b), connecting the 2 subunits; these bridges are implicated in subunit movement. Contacts the tRNAs in the A and P-sites. The protein is Small ribosomal subunit protein uS13 of Microcystis aeruginosa (strain NIES-843 / IAM M-2473).